The sequence spans 304 residues: Non-specific ribonucleoside hydrolase RihC (304 aa).

His-233 is a catalytic residue.

The protein belongs to the IUNH family. RihC subfamily.

Functionally, hydrolyzes both purine and pyrimidine ribonucleosides with a broad-substrate specificity. The sequence is that of Non-specific ribonucleoside hydrolase RihC from Klebsiella pneumoniae subsp. pneumoniae (strain ATCC 700721 / MGH 78578).